The sequence spans 324 residues: Geranylgeranyl pyrophosphate synthase dpmpD (324 aa).

Isopentenyl diphosphate contacts are provided by Lys50, Arg53, and His82. Mg(2+) contacts are provided by Asp89 and Asp93. Position 98 (Arg98) interacts with dimethylallyl diphosphate. Arg99 contributes to the isopentenyl diphosphate binding site. Residues Lys176, Thr177, and Gln210 each coordinate dimethylallyl diphosphate. Asp213 serves as a coordination point for Mg(2+). Residues Asn217, Lys227, and Lys237 each coordinate dimethylallyl diphosphate.

The protein belongs to the FPP/GGPP synthase family. The cofactor is Mg(2+).

It catalyses the reaction isopentenyl diphosphate + dimethylallyl diphosphate = (2E)-geranyl diphosphate + diphosphate. The enzyme catalyses isopentenyl diphosphate + (2E)-geranyl diphosphate = (2E,6E)-farnesyl diphosphate + diphosphate. The catalysed reaction is isopentenyl diphosphate + (2E,6E)-farnesyl diphosphate = (2E,6E,10E)-geranylgeranyl diphosphate + diphosphate. Its pathway is secondary metabolite biosynthesis; terpenoid biosynthesis. Its function is as follows. Geranylgeranyl pyrophosphate synthase; part of the gene cluster that mediates the biosynthesis of diterpenoid pyrones. The first step of the pathway is the synthesis of the alpha-pyrone moiety by the polyketide synthase dpmpA via condensation of one acetyl-CoA starter unit with 3 malonyl-CoA units and 2 methylations. The alpha-pyrone is then combined with geranylgeranyl pyrophosphate (GGPP) formed by the GGPP synthase dpmpD through the action of the prenyltransferase dpmpC to yield a linear alpha-pyrone diterpenoid. Subsequent steps in the diterpenoid pyrone biosynthetic pathway involve the decalin core formation, which is initiated by the epoxidation of the C10-C11 olefin by the FAD-dependent oxidoreductase dpmpE, and is followed by a cyclization cascade catalyzed by the terpene cyclase dpmpB. The short chain dehydrogenase/reductase dpmpG then oxidizes the 8S hydroxy group to a ketone and the short chain dehydrogenase/reductase dpmpH reduces the ketone to the 8R hydroxy group to yield higginsianin B. Higginsianin B is further methylated by the methyltransferase dpmpI to produce the intermediate named FDDP B. The cytochrome P450 monooxygenase dpmpJ then oxidizes the C-26 methyl to primary alcohol, producing the final diterpenoid pyrone with a C-26 primary alcohol on the gamma-pyrone moiety named FDDP C. This Macrophomina phaseolina (strain MS6) (Charcoal rot fungus) protein is Geranylgeranyl pyrophosphate synthase dpmpD.